The chain runs to 204 residues: Peptide deformylase (204 aa).

C131 and H174 together coordinate Fe cation. Residue E175 is part of the active site. Residue H178 participates in Fe cation binding.

The protein belongs to the polypeptide deformylase family. Requires Fe(2+) as cofactor.

The enzyme catalyses N-terminal N-formyl-L-methionyl-[peptide] + H2O = N-terminal L-methionyl-[peptide] + formate. Its function is as follows. Removes the formyl group from the N-terminal Met of newly synthesized proteins. Requires at least a dipeptide for an efficient rate of reaction. N-terminal L-methionine is a prerequisite for activity but the enzyme has broad specificity at other positions. The protein is Peptide deformylase of Streptococcus agalactiae serotype III (strain NEM316).